Here is a 632-residue protein sequence, read N- to C-terminus: Probable membrane transporter protein MamO (632 aa).

A helical transmembrane segment spans residues 25–45 (APVSILAFLILVTFAWGAYLL). A protease-like region spans residues 78–268 (LYYTVPPAVV…VIVSHLQDVV (191 aa)). A divalent metal cation-binding residues include histidine 148 and histidine 263. A run of 7 helical transmembrane segments spans residues 340 to 360 (IGGY…AAGV), 412 to 432 (LVQW…VVIG), 434 to 454 (FIGN…FALI), 513 to 533 (AVLG…GGVI), 550 to 570 (IANS…VAFI), 582 to 602 (APVT…ILGA), and 612 to 632 (VLKG…LTTV). Residues 365-632 (MTMGGGVLQV…AIAIKMLTTV (268 aa)) form a TSUP-like region.

In the N-terminal section; belongs to the peptidase S1C family. It in the C-terminal section; belongs to the 4-toluene sulfonate uptake permease (TSUP) (TC 2.A.102) family. Requires a metal cation as cofactor. In terms of processing, subject to proteolytic cleavage by MamE.

It is found in the magnetosome membrane. Functionally, plays 2 roles; promotes magnetite nucleation/formation and activates the MamE protease. Despite its near conservation of a protease-like sequence, this is probably not a protease. Required in conjunction with MamP for proteolysis of at least MamE, itself and MamP. May transport a solute that controls MamE's protease activity. May place individual iron atoms into the magnetite lattice. One of 7 genes (mamLQBIEMO) able to induce magnetosome membrane biogenesis; coexpression of mamLQRBIEMO in a deletion of the 17 gene mamAB operon restores magnetosome vesicle formation but not magnetite biosynthesis. This is Probable membrane transporter protein MamO from Magnetospirillum gryphiswaldense (strain DSM 6361 / JCM 21280 / NBRC 15271 / MSR-1).